The sequence spans 349 residues: Alanine racemase (349 aa).

The active-site Proton acceptor; specific for D-alanine is K35. N6-(pyridoxal phosphate)lysine is present on K35. R130 lines the substrate pocket. Y244 functions as the Proton acceptor; specific for L-alanine in the catalytic mechanism. Substrate is bound at residue M292.

It belongs to the alanine racemase family. Requires pyridoxal 5'-phosphate as cofactor.

The catalysed reaction is L-alanine = D-alanine. It participates in amino-acid biosynthesis; D-alanine biosynthesis; D-alanine from L-alanine: step 1/1. In terms of biological role, catalyzes the interconversion of L-alanine and D-alanine. May also act on other amino acids. The chain is Alanine racemase (alr) from Cereibacter sphaeroides (strain KD131 / KCTC 12085) (Rhodobacter sphaeroides).